Reading from the N-terminus, the 646-residue chain is Choline transporter-like protein 1 (646 aa).

Over 1–27 (MGCCGCGSEEGSVRQWKPLEQRSCTDV) the chain is Cytoplasmic. A helical transmembrane segment spans residues 28-48 (LWLLIFVLFCIGMAIICGFAI). Residues 49-207 (ASGAAQRLVF…RVITGVMTSK (159 aa)) are Extracellular-facing. N-linked (GlcNAc...) asparagine glycosylation occurs at Asn-133. The helical transmembrane segment at 208 to 228 (EIIVGLCLMSLVLSILLMVII) threads the bilayer. Residues 229 to 233 (RYISK) lie on the Cytoplasmic side of the membrane. Residues 234–254 (VLVWILAILTIIGSIGGTAVL) traverse the membrane as a helical segment. Residues 255–281 (WWLYADHKKTLKLDPSQGDVAADNVTA) lie on the Extracellular side of the membrane. Residue Asn-278 is glycosylated (N-linked (GlcNAc...) asparagine). A helical transmembrane segment spans residues 282–302 (LLVCAIIATVITVILLLLMLI). Residues 303-308 (MRKRVA) lie on the Cytoplasmic side of the membrane. A helical membrane pass occupies residues 309 to 329 (LTIALFHVAGKVFIHIPFLIF). At 330 to 331 (QS) the chain is on the extracellular side. A helical transmembrane segment spans residues 332 to 352 (LWTFLALAFFWIYWIAVLLLL). Over 353–373 (ATAGYPQKKDQGYVEFKVSGP) the chain is Cytoplasmic. A helical membrane pass occupies residues 374–394 (LQYTWIYHLVGLIWISEFILA). The Extracellular segment spans residues 395–435 (CQQMTIAGAVVTYYFTRDKHNLPATPILASMCRLIKYHLGT). A helical transmembrane segment spans residues 436 to 456 (VAKGSFIITLIKIPQMILVYI). The Cytoplasmic portion of the chain corresponds to 457-530 (HSQLKGKENA…RVAAINTVGD (74 aa)). The chain crosses the membrane as a helical span at residues 531–551 (FVLFLGKLLIVLVTGFVGIIL). At 552 to 559 (LNYQRDYT) the chain is on the extracellular side. A helical transmembrane segment spans residues 560–580 (VWVLPLIIICLFAFFVSHCFL). Topologically, residues 581–646 (SIYEMVVDVL…KSMASGSDNA (66 aa)) are cytoplasmic.

This sequence belongs to the CTL (choline transporter-like) family. As to expression, present in myelinated structures from brain and spinal cord (at protein level).

Its subcellular location is the cell membrane. The protein resides in the mitochondrion outer membrane. It carries out the reaction choline(out) + n H(+)(in) = choline(in) + n H(+)(out). The enzyme catalyses ethanolamine(out) + n H(+)(in) = ethanolamine(in) + n H(+)(out). Functionally, probable choline transporter. May be involved in membrane synthesis and myelin production. This is Choline transporter-like protein 1 (slc44a1) from Torpedo marmorata (Marbled electric ray).